Reading from the N-terminus, the 90-residue chain is Envelope glycoprotein N (90 aa).

The signal sequence occupies residues 1 to 21 (MTWKLFICFLSFGVIFLRVSS). Over 22 to 55 (LTEKSHTTSYTILHNNNFYSNSCSADTYVPSIKT) the chain is Virion surface. Residues 56-76 (FSSVWAILNVIIFFCASLFYL) form a helical membrane-spanning segment. Residues 77–90 (RHLCIVKFISNLTK) lie on the Intravirion side of the membrane.

It belongs to the herpesviridae glycoprotein N family. In terms of assembly, interacts (via N-terminus) with gM (via N-terminus). The gM-gN heterodimer forms the gCII complex.

Its subcellular location is the virion membrane. It localises to the host membrane. The protein resides in the host Golgi apparatus. It is found in the host trans-Golgi network. In terms of biological role, envelope glycoprotein necessary for proper maturation of gM and modulation of its membrane fusion activity. Also plays a critical role in virion morphogenesis. In Saimiriine herpesvirus 2 (strain 11) (SaHV-2), this protein is Envelope glycoprotein N.